The chain runs to 222 residues: Urease accessory protein UreF (222 aa).

Belongs to the UreF family. In terms of assembly, ureD, UreF and UreG form a complex that acts as a GTP-hydrolysis-dependent molecular chaperone, activating the urease apoprotein by helping to assemble the nickel containing metallocenter of UreC. The UreE protein probably delivers the nickel.

Its subcellular location is the cytoplasm. Required for maturation of urease via the functional incorporation of the urease nickel metallocenter. In Hahella chejuensis (strain KCTC 2396), this protein is Urease accessory protein UreF.